Reading from the N-terminus, the 416-residue chain is Tryptophan synthase beta chain (416 aa).

Lys109 bears the N6-(pyridoxal phosphate)lysine mark.

Belongs to the TrpB family. Tetramer of two alpha and two beta chains. The cofactor is pyridoxal 5'-phosphate.

It catalyses the reaction (1S,2R)-1-C-(indol-3-yl)glycerol 3-phosphate + L-serine = D-glyceraldehyde 3-phosphate + L-tryptophan + H2O. It participates in amino-acid biosynthesis; L-tryptophan biosynthesis; L-tryptophan from chorismate: step 5/5. In terms of biological role, the beta subunit is responsible for the synthesis of L-tryptophan from indole and L-serine. The sequence is that of Tryptophan synthase beta chain from Mesorhizobium japonicum (strain LMG 29417 / CECT 9101 / MAFF 303099) (Mesorhizobium loti (strain MAFF 303099)).